The sequence spans 217 residues: Ras-related protein RABA2c (217 aa).

Residues 19–27, 38–44, 67–71, 125–128, and 155–157 each bind GTP; these read GDSGVGKSN, CLESKST, DTAGQ, NKSD, and SAL. Positions 41–49 match the Effector region motif; it reads SKSTIGVEF. The interval 195–217 is disordered; the sequence is PGQGTTINVDDTSGGAKRACCSS. Residues Cys-214 and Cys-215 are each lipidated (S-geranylgeranyl cysteine).

This sequence belongs to the small GTPase superfamily. Rab family. Expressed in root tips.

It is found in the endosome membrane. Its subcellular location is the golgi apparatus. It localises to the trans-Golgi network membrane. In terms of biological role, intracellular vesicle trafficking and protein transport. In Arabidopsis thaliana (Mouse-ear cress), this protein is Ras-related protein RABA2c (RABA2C).